Consider the following 190-residue polypeptide: MNNNLPTGSIAAAVDLLNKENVIAYPTEAVFGVGCDPDSETAVTRLLELKQRPVDKGLILIAASFEQLKPYIDDSILTTAQRKAVFDCWPGPVTFVFPASATTPRWLTGRFDSLAVRVTDHPLVVALCNAYGKPLVSTSANLSGLPPCRTVEEVRAQFGDDFPMVEGATGGRLNPSEIRDALTGELFRQG.

Residues 7–190 enclose the YrdC-like domain; it reads TGSIAAAVDL…ALTGELFRQG (184 aa).

It belongs to the SUA5 family. TsaC subfamily.

It localises to the cytoplasm. The enzyme catalyses L-threonine + hydrogencarbonate + ATP = L-threonylcarbamoyladenylate + diphosphate + H2O. Functionally, required for the formation of a threonylcarbamoyl group on adenosine at position 37 (t(6)A37) in tRNAs that read codons beginning with adenine. Catalyzes the conversion of L-threonine, HCO(3)(-)/CO(2) and ATP to give threonylcarbamoyl-AMP (TC-AMP) as the acyladenylate intermediate, with the release of diphosphate. This is Threonylcarbamoyl-AMP synthase from Salmonella arizonae (strain ATCC BAA-731 / CDC346-86 / RSK2980).